We begin with the raw amino-acid sequence, 124 residues long: uncharacterized protein (124 aa).

The span at 62–72 shows a compositional bias: basic residues; sequence KKNKKQTFLKH. The interval 62–86 is disordered; it reads KKNKKQTFLKHHQSDDHSENKVYKS. Residues 73 to 83 show a composition bias toward basic and acidic residues; that stretch reads HQSDDHSENKV. Residues 80 to 112 are a coiled coil; it reads ENKVYKSKKLEKKIQQLNKKKQLIDTKINFLKE.

This is an uncharacterized protein from Dictyostelium discoideum (Social amoeba).